We begin with the raw amino-acid sequence, 171 residues long: Adenine phosphoribosyltransferase (171 aa).

This sequence belongs to the purine/pyrimidine phosphoribosyltransferase family. In terms of assembly, homodimer.

The protein resides in the cytoplasm. It catalyses the reaction AMP + diphosphate = 5-phospho-alpha-D-ribose 1-diphosphate + adenine. Its pathway is purine metabolism; AMP biosynthesis via salvage pathway; AMP from adenine: step 1/1. Functionally, catalyzes a salvage reaction resulting in the formation of AMP, that is energically less costly than de novo synthesis. This Prochlorococcus marinus (strain MIT 9515) protein is Adenine phosphoribosyltransferase.